Here is a 225-residue protein sequence, read N- to C-terminus: Triosephosphate isomerase (225 aa).

Residue 9–11 (NMK) participates in substrate binding. H93 (electrophile) is an active-site residue. Catalysis depends on E141, which acts as the Proton acceptor. Substrate contacts are provided by residues I146, G181, and 202-203 (AS).

The protein belongs to the triosephosphate isomerase family. Homotetramer; dimer of dimers.

It is found in the cytoplasm. It carries out the reaction D-glyceraldehyde 3-phosphate = dihydroxyacetone phosphate. It participates in carbohydrate biosynthesis; gluconeogenesis. Its pathway is carbohydrate degradation; glycolysis; D-glyceraldehyde 3-phosphate from glycerone phosphate: step 1/1. In terms of biological role, involved in the gluconeogenesis. Catalyzes stereospecifically the conversion of dihydroxyacetone phosphate (DHAP) to D-glyceraldehyde-3-phosphate (G3P). The chain is Triosephosphate isomerase from Caldivirga maquilingensis (strain ATCC 700844 / DSM 13496 / JCM 10307 / IC-167).